We begin with the raw amino-acid sequence, 54 residues long: UPF0391 membrane protein Pfl01_0044 (54 aa).

A run of 2 helical transmembrane segments spans residues 4–24 and 29–49; these read WAIT…GGIA and GIAK…FFFG.

The protein belongs to the UPF0391 family.

It localises to the cell membrane. This is UPF0391 membrane protein Pfl01_0044 from Pseudomonas fluorescens (strain Pf0-1).